The primary structure comprises 587 residues: Glutaconyl-CoA decarboxylase subunit alpha (587 aa).

The CoA carboxyltransferase N-terminal domain maps to 31–298; the sequence is LKKIEEEIHQ…YDPEFFRVDD (268 aa). A carboxyltransferase region spans residues 31–558; the sequence is LKKIEEEIHQ…RGYVEAFTEA (528 aa). A CoA carboxyltransferase C-terminal domain is found at 295 to 558; sequence RVDDPKAPAF…RGYVEAFTEA (264 aa).

As to quaternary structure, heterooctamer consisting of two alpha, two beta, two gamma and two delta subunits.

It catalyses the reaction (2E)-glutaconyl-CoA + Na(+)(in) + H(+) = (2E)-butenoyl-CoA + Na(+)(out) + CO2. It participates in amino-acid degradation; L-glutamate degradation via hydroxyglutarate pathway; crotonoyl-CoA from L-glutamate: step 5/5. Functionally, decarboxylase subunit of the primary sodium pump glutaconyl-CoA decarboxylase (GCD). The chain is Glutaconyl-CoA decarboxylase subunit alpha (gcdA) from Acidaminococcus fermentans (strain ATCC 25085 / DSM 20731 / CCUG 9996 / CIP 106432 / VR4).